A 332-amino-acid polypeptide reads, in one-letter code: Serine, glycine, tyrosine and glutamine-rich protein (332 aa).

Positions 1–17 (MMKTVLLLVVLVGVAYC) are cleaved as a signal peptide. Residues 39–81 (SSSSSSSSSSGGGGSSGGGASGGGGGGGSSGGGGASGGGGGGS) form a disordered region. Residues 48 to 81 (SGGGGSSGGGASGGGGGGGSSGGGGASGGGGGGS) show a composition bias toward gly residues.

Prismatic layer of shell (at protein level). Expressed primarily in the mantle with highest level in the mantle edge and lower level in the mantle pallium.

It is found in the secreted. This chain is Serine, glycine, tyrosine and glutamine-rich protein, found in Margaritifera margaritifera (Freshwater pearl mussel).